A 216-amino-acid chain; its full sequence is Protein-L-isoaspartate O-methyltransferase (216 aa).

Ser-61 is a catalytic residue.

It belongs to the methyltransferase superfamily. L-isoaspartyl/D-aspartyl protein methyltransferase family.

The protein localises to the cytoplasm. The catalysed reaction is [protein]-L-isoaspartate + S-adenosyl-L-methionine = [protein]-L-isoaspartate alpha-methyl ester + S-adenosyl-L-homocysteine. Its function is as follows. Catalyzes the methyl esterification of L-isoaspartyl residues in peptides and proteins that result from spontaneous decomposition of normal L-aspartyl and L-asparaginyl residues. It plays a role in the repair and/or degradation of damaged proteins. This chain is Protein-L-isoaspartate O-methyltransferase, found in Geobacter metallireducens (strain ATCC 53774 / DSM 7210 / GS-15).